The primary structure comprises 196 residues: Peptidyl-tRNA hydrolase (196 aa).

A tRNA-binding site is contributed by Y16. H21 functions as the Proton acceptor in the catalytic mechanism. F67, N69, and N115 together coordinate tRNA.

It belongs to the PTH family. In terms of assembly, monomer.

The protein localises to the cytoplasm. It catalyses the reaction an N-acyl-L-alpha-aminoacyl-tRNA + H2O = an N-acyl-L-amino acid + a tRNA + H(+). Its function is as follows. Hydrolyzes ribosome-free peptidyl-tRNAs (with 1 or more amino acids incorporated), which drop off the ribosome during protein synthesis, or as a result of ribosome stalling. Catalyzes the release of premature peptidyl moieties from peptidyl-tRNA molecules trapped in stalled 50S ribosomal subunits, and thus maintains levels of free tRNAs and 50S ribosomes. This Edwardsiella ictaluri (strain 93-146) protein is Peptidyl-tRNA hydrolase.